The primary structure comprises 155 residues: SsrA-binding protein (155 aa).

The protein belongs to the SmpB family.

The protein localises to the cytoplasm. Required for rescue of stalled ribosomes mediated by trans-translation. Binds to transfer-messenger RNA (tmRNA), required for stable association of tmRNA with ribosomes. tmRNA and SmpB together mimic tRNA shape, replacing the anticodon stem-loop with SmpB. tmRNA is encoded by the ssrA gene; the 2 termini fold to resemble tRNA(Ala) and it encodes a 'tag peptide', a short internal open reading frame. During trans-translation Ala-aminoacylated tmRNA acts like a tRNA, entering the A-site of stalled ribosomes, displacing the stalled mRNA. The ribosome then switches to translate the ORF on the tmRNA; the nascent peptide is terminated with the 'tag peptide' encoded by the tmRNA and targeted for degradation. The ribosome is freed to recommence translation, which seems to be the essential function of trans-translation. In Bacillus cereus (strain ATCC 10987 / NRS 248), this protein is SsrA-binding protein.